Here is a 67-residue protein sequence, read N- to C-terminus: Large ribosomal subunit protein uL29 (67 aa).

It belongs to the universal ribosomal protein uL29 family.

The protein is Large ribosomal subunit protein uL29 of Solibacter usitatus (strain Ellin6076).